A 296-amino-acid chain; its full sequence is 4-hydroxybenzoate octaprenyltransferase (296 aa).

Helical transmembrane passes span 28-48 (PIGI…AGLG), 52-72 (LANV…GCCI), 102-122 (ALAL…CTNS), 145-167 (TYYP…FTAA), 174-196 (SAWL…YAMV), 219-239 (MIIL…GSRF), 241-261 (LGGW…WEYW), and 275-295 (FLHN…DYAL).

It belongs to the UbiA prenyltransferase family. Mg(2+) is required as a cofactor.

The protein localises to the cell inner membrane. It catalyses the reaction all-trans-octaprenyl diphosphate + 4-hydroxybenzoate = 4-hydroxy-3-(all-trans-octaprenyl)benzoate + diphosphate. The protein operates within cofactor biosynthesis; ubiquinone biosynthesis. Functionally, catalyzes the prenylation of para-hydroxybenzoate (PHB) with an all-trans polyprenyl group. Mediates the second step in the final reaction sequence of ubiquinone-8 (UQ-8) biosynthesis, which is the condensation of the polyisoprenoid side chain with PHB, generating the first membrane-bound Q intermediate 3-octaprenyl-4-hydroxybenzoate. This is 4-hydroxybenzoate octaprenyltransferase from Pseudomonas putida (strain W619).